The primary structure comprises 264 residues: 3-methyl-2-oxobutanoate hydroxymethyltransferase (264 aa).

D45 and D84 together coordinate Mg(2+). 3-methyl-2-oxobutanoate-binding positions include D45 to S46, D84, and K112. E114 serves as a coordination point for Mg(2+). E181 (proton acceptor) is an active-site residue.

This sequence belongs to the PanB family. In terms of assembly, homodecamer; pentamer of dimers. Requires Mg(2+) as cofactor.

It is found in the cytoplasm. The enzyme catalyses 3-methyl-2-oxobutanoate + (6R)-5,10-methylene-5,6,7,8-tetrahydrofolate + H2O = 2-dehydropantoate + (6S)-5,6,7,8-tetrahydrofolate. It functions in the pathway cofactor biosynthesis; (R)-pantothenate biosynthesis; (R)-pantoate from 3-methyl-2-oxobutanoate: step 1/2. Catalyzes the reversible reaction in which hydroxymethyl group from 5,10-methylenetetrahydrofolate is transferred onto alpha-ketoisovalerate to form ketopantoate. The chain is 3-methyl-2-oxobutanoate hydroxymethyltransferase from Shewanella piezotolerans (strain WP3 / JCM 13877).